A 322-amino-acid polypeptide reads, in one-letter code: Undecaprenyl-phosphate 4-deoxy-4-formamido-L-arabinose transferase (322 aa).

Residues 1–235 are Cytoplasmic-facing; it reads MFEIHPVKKV…TCLTTTPLRM (235 aa). A helical transmembrane segment spans residues 236 to 256; it reads LSLLGSIIAIGGFSIAVLLVI. Residues 257-269 lie on the Periplasmic side of the membrane; that stretch reads LRLTFGPQWAAEG. Residues 270-290 form a helical membrane-spanning segment; it reads VFMLFAVLFTFIGAQFIGMGL. Residues 291 to 322 are Cytoplasmic-facing; the sequence is LGEYIGRIYTDVRARPRYFVQQVIRPSSKENE.

Belongs to the glycosyltransferase 2 family.

Its subcellular location is the cell inner membrane. The catalysed reaction is UDP-4-deoxy-4-formamido-beta-L-arabinose + di-trans,octa-cis-undecaprenyl phosphate = 4-deoxy-4-formamido-alpha-L-arabinopyranosyl di-trans,octa-cis-undecaprenyl phosphate + UDP. It participates in glycolipid biosynthesis; 4-amino-4-deoxy-alpha-L-arabinose undecaprenyl phosphate biosynthesis; 4-amino-4-deoxy-alpha-L-arabinose undecaprenyl phosphate from UDP-4-deoxy-4-formamido-beta-L-arabinose and undecaprenyl phosphate: step 1/2. The protein operates within bacterial outer membrane biogenesis; lipopolysaccharide biosynthesis. Its function is as follows. Catalyzes the transfer of 4-deoxy-4-formamido-L-arabinose from UDP to undecaprenyl phosphate. The modified arabinose is attached to lipid A and is required for resistance to polymyxin and cationic antimicrobial peptides. The protein is Undecaprenyl-phosphate 4-deoxy-4-formamido-L-arabinose transferase of Escherichia coli O45:K1 (strain S88 / ExPEC).